A 322-amino-acid polypeptide reads, in one-letter code: Adenine deaminase (322 aa).

Zn(2+) contacts are provided by His11, His13, and His189. Glu192 functions as the Proton donor in the catalytic mechanism. Asp270 is a binding site for Zn(2+). Asp271 lines the substrate pocket.

This sequence belongs to the metallo-dependent hydrolases superfamily. Adenosine and AMP deaminases family. Adenine deaminase type 2 subfamily. Requires Zn(2+) as cofactor.

It carries out the reaction adenine + H2O + H(+) = hypoxanthine + NH4(+). Functionally, catalyzes the hydrolytic deamination of adenine to hypoxanthine. Plays an important role in the purine salvage pathway and in nitrogen catabolism. The protein is Adenine deaminase of Rhizobium etli (strain ATCC 51251 / DSM 11541 / JCM 21823 / NBRC 15573 / CFN 42).